Here is a 464-residue protein sequence, read N- to C-terminus: Na(+)/H(+) antiporter NhaA (464 aa).

Helical transmembrane passes span 37-57 (GSGI…NTSC), 82-102 (IHYW…GLEI), 118-138 (VLPI…YFSF), 145-165 (VSGW…ILLL), 176-196 (AVLV…IAIF), 200-220 (NLAW…LLLN), 226-246 (ALWA…FSGV), 248-268 (ATVA…YSPT), 321-341 (ILNT…NAGV), 360-380 (VFFG…MICV), 396-416 (VLGI…VSEL), and 430-450 (ITIL…LRFI).

Belongs to the NhaA Na(+)/H(+) (TC 2.A.33) antiporter family.

The protein resides in the cell inner membrane. The enzyme catalyses Na(+)(in) + 2 H(+)(out) = Na(+)(out) + 2 H(+)(in). Na(+)/H(+) antiporter that extrudes sodium in exchange for external protons. This is Na(+)/H(+) antiporter NhaA from Dichelobacter nodosus (strain VCS1703A).